Reading from the N-terminus, the 239-residue chain is Endolytic peptidoglycan transglycosylase RlpA (239 aa).

An N-terminal signal peptide occupies residues 1 to 25 (MTLTRKTLFLLTAAFGIHSFQTASA). Residues 160-239 (VAENKDIFID…GMVRAVLTAG (80 aa)) enclose the SPOR domain.

This sequence belongs to the RlpA family.

Lytic transglycosylase with a strong preference for naked glycan strands that lack stem peptides. The sequence is that of Endolytic peptidoglycan transglycosylase RlpA from Neisseria meningitidis serogroup A / serotype 4A (strain DSM 15465 / Z2491).